The chain runs to 82 residues: ATP synthase subunit c, chloroplastic (82 aa).

The next 2 membrane-spanning stretches (helical) occupy residues 4–24 (IISA…AIGP) and 57–77 (LAFM…LLFA).

This sequence belongs to the ATPase C chain family. In terms of assembly, F-type ATPases have 2 components, F(1) - the catalytic core - and F(0) - the membrane proton channel. F(1) has five subunits: alpha(3), beta(3), gamma(1), delta(1), epsilon(1). F(0) has four main subunits: a(1), b(1), b'(1) and c(10-14). The alpha and beta chains form an alternating ring which encloses part of the gamma chain. F(1) is attached to F(0) by a central stalk formed by the gamma and epsilon chains, while a peripheral stalk is formed by the delta, b and b' chains.

Its subcellular location is the plastid. The protein resides in the chloroplast thylakoid membrane. Functionally, f(1)F(0) ATP synthase produces ATP from ADP in the presence of a proton or sodium gradient. F-type ATPases consist of two structural domains, F(1) containing the extramembraneous catalytic core and F(0) containing the membrane proton channel, linked together by a central stalk and a peripheral stalk. During catalysis, ATP synthesis in the catalytic domain of F(1) is coupled via a rotary mechanism of the central stalk subunits to proton translocation. Its function is as follows. Key component of the F(0) channel; it plays a direct role in translocation across the membrane. A homomeric c-ring of between 10-14 subunits forms the central stalk rotor element with the F(1) delta and epsilon subunits. This Thalassiosira pseudonana (Marine diatom) protein is ATP synthase subunit c, chloroplastic.